We begin with the raw amino-acid sequence, 161 residues long: Allophycocyanin subunit alpha 1 (161 aa).

N71 is subject to N4-methylasparagine. C81 serves as a coordination point for (2R,3E)-phycocyanobilin.

It belongs to the phycobiliprotein family. As to quaternary structure, heterohexamer of two alpha chains, one alpha-B chain and three beta chains. Contains one covalently linked phycocyanobilin chromophore. The chromophore is added by phycocyanobilin lyase CpcS 1.

The protein localises to the cellular thylakoid membrane. Functionally, light-harvesting photosynthetic bile pigment-protein from the phycobiliprotein complex. Allophycocyanin has a maximum absorption at approximately 650 to 653 nanometers. This Nostoc sp. (strain PCC 7120 / SAG 25.82 / UTEX 2576) protein is Allophycocyanin subunit alpha 1 (apcA1).